We begin with the raw amino-acid sequence, 248 residues long: tRNA pseudouridine synthase A (248 aa).

Residue aspartate 55 is the Nucleophile of the active site. Tyrosine 114 is a binding site for substrate.

The protein belongs to the tRNA pseudouridine synthase TruA family. As to quaternary structure, homodimer.

It catalyses the reaction uridine(38/39/40) in tRNA = pseudouridine(38/39/40) in tRNA. Formation of pseudouridine at positions 38, 39 and 40 in the anticodon stem and loop of transfer RNAs. This Rhodopseudomonas palustris (strain ATCC BAA-98 / CGA009) protein is tRNA pseudouridine synthase A.